The chain runs to 692 residues: A-type ATP synthase subunit I (692 aa).

A run of 7 helical transmembrane segments spans residues 389–409, 422–442, 494–514, 531–551, 553–573, 602–622, and 624–644; these read GIML…LFIW, LGYI…ITGG, ILVF…FVGF, GVWI…FAGA, TMIA…ASMY, ARLL…NIMA, and LVGE…LLVG.

Belongs to the V-ATPase 116 kDa subunit family. In terms of assembly, the A-type ATPase is composed of subunits A(3), B(3), C, D, E(1 or 2), F, H(2), I and K(x).

It is found in the cell membrane. Functionally, component of the A-type ATP synthase that produces ATP from ADP in the presence of a proton gradient across the membrane. In Methanocaldococcus jannaschii (strain ATCC 43067 / DSM 2661 / JAL-1 / JCM 10045 / NBRC 100440) (Methanococcus jannaschii), this protein is A-type ATP synthase subunit I.